The sequence spans 248 residues: MILLISDLHLEQDRPDITRAFLDLLAGRAREAEALYILGDFFEVWIGDDAMSPFQLSICKALRALSDSGTRIFLMHGNRDFMIGKGFCKAAGCTLLSDPSVVQLNGERVLLMHGDSLCTRDEGYIRMRRYLRHPLTLFILRHLPLGTRHKLARKLRNESRAQTRMKANDIVDVTPDEVPRIMQQFGVRTLVHGHTHRPAIHKLQIGDQAARRIVLGDWDRQGWVLQVDEQGFSLNSFDFVPETTALLN.

Residues aspartate 7, histidine 9, aspartate 40, asparagine 78, and histidine 113 each contribute to the Mn(2+) site. A substrate-binding site is contributed by 78–79; that stretch reads NR. Residues aspartate 121, serine 159, threonine 163, lysine 166, and histidine 194 each coordinate substrate. Residues histidine 194 and histidine 196 each coordinate Mn(2+).

It belongs to the LpxH family. Mn(2+) is required as a cofactor.

It localises to the cell inner membrane. The enzyme catalyses UDP-2-N,3-O-bis[(3R)-3-hydroxytetradecanoyl]-alpha-D-glucosamine + H2O = 2-N,3-O-bis[(3R)-3-hydroxytetradecanoyl]-alpha-D-glucosaminyl 1-phosphate + UMP + 2 H(+). The protein operates within glycolipid biosynthesis; lipid IV(A) biosynthesis; lipid IV(A) from (3R)-3-hydroxytetradecanoyl-[acyl-carrier-protein] and UDP-N-acetyl-alpha-D-glucosamine: step 4/6. Its function is as follows. Hydrolyzes the pyrophosphate bond of UDP-2,3-diacylglucosamine to yield 2,3-diacylglucosamine 1-phosphate (lipid X) and UMP by catalyzing the attack of water at the alpha-P atom. Involved in the biosynthesis of lipid A, a phosphorylated glycolipid that anchors the lipopolysaccharide to the outer membrane of the cell. This chain is UDP-2,3-diacylglucosamine hydrolase, found in Pseudomonas savastanoi pv. phaseolicola (strain 1448A / Race 6) (Pseudomonas syringae pv. phaseolicola (strain 1448A / Race 6)).